A 257-amino-acid polypeptide reads, in one-letter code: tRNA (guanine-N(7)-)-methyltransferase (257 aa).

Residues methionine 1–threonine 12 show a composition bias toward acidic residues. The tract at residues methionine 1 to serine 25 is disordered. S-adenosyl-L-methionine contacts are provided by residues glycine 80, glutamate 103 to isoleucine 104, asparagine 138 to alanine 139, and leucine 158. Residue aspartate 161 is part of the active site. Position 236–238 (serine 236–glutamate 238) interacts with S-adenosyl-L-methionine.

This sequence belongs to the class I-like SAM-binding methyltransferase superfamily. TrmB family.

The protein localises to the nucleus. It carries out the reaction guanosine(46) in tRNA + S-adenosyl-L-methionine = N(7)-methylguanosine(46) in tRNA + S-adenosyl-L-homocysteine. It participates in tRNA modification; N(7)-methylguanine-tRNA biosynthesis. Catalyzes the formation of N(7)-methylguanine at position 46 (m7G46) in tRNA. In Drosophila ananassae (Fruit fly), this protein is tRNA (guanine-N(7)-)-methyltransferase.